The following is a 108-amino-acid chain: uncharacterized protein (108 aa).

3 helical membrane-spanning segments follow: residues 36 to 56 (LAIM…DKMI), 58 to 78 (FIFV…KLLF), and 88 to 108 (IVFL…FFNL).

The protein localises to the cell membrane. This is an uncharacterized protein from Alkalihalophilus pseudofirmus (strain ATCC BAA-2126 / JCM 17055 / OF4) (Bacillus pseudofirmus).